A 371-amino-acid chain; its full sequence is Zygote-specific protein 3 (371 aa).

The N-terminal stretch at 1–24 (MLRSAGRVAAVALLALFALGCVSA) is a signal peptide. An N-linked (GlcNAc...) asparagine glycan is attached at Asn-41. 2 ANK repeats span residues 62–91 (TRRL…LARV) and 94–123 (GTTT…DPNA). WW domains follow at residues 159–187 (EPGA…WAVP) and 283–313 (YATP…WELP).

It localises to the endoplasmic reticulum lumen. May have a role in the remodeling of the endoplasmic reticulum upon zygote formation. In Chlamydomonas reinhardtii (Chlamydomonas smithii), this protein is Zygote-specific protein 3 (ZYS3).